Consider the following 428-residue polypeptide: Kynureninase (428 aa).

Residues Thr-104, Thr-105, 132–135 (FPSD), Asp-213, His-216, and Tyr-238 each bind pyridoxal 5'-phosphate. Lys-239 carries the post-translational modification N6-(pyridoxal phosphate)lysine. Pyridoxal 5'-phosphate is bound by residues Trp-267 and Thr-295.

The protein belongs to the kynureninase family. As to quaternary structure, homodimer. Pyridoxal 5'-phosphate is required as a cofactor.

It carries out the reaction L-kynurenine + H2O = anthranilate + L-alanine + H(+). The catalysed reaction is 3-hydroxy-L-kynurenine + H2O = 3-hydroxyanthranilate + L-alanine + H(+). Its pathway is amino-acid degradation; L-kynurenine degradation; L-alanine and anthranilate from L-kynurenine: step 1/1. It functions in the pathway cofactor biosynthesis; NAD(+) biosynthesis; quinolinate from L-kynurenine: step 2/3. Functionally, catalyzes the cleavage of L-kynurenine (L-Kyn) and L-3-hydroxykynurenine (L-3OHKyn) into anthranilic acid (AA) and 3-hydroxyanthranilic acid (3-OHAA), respectively. The chain is Kynureninase from Bacillus anthracis.